Consider the following 394-residue polypeptide: Choline/ethanolamine kinase (394 aa).

The disordered stretch occupies residues 1–42 (MAADGTGVVGGGAVGGGLPKDGLQDAKCPEPIPNRRRASSLS). Alanine 2 bears the N-acetylalanine mark. Over residues 7-19 (GVVGGGAVGGGLP) the composition is skewed to gly residues. Residues 75-81 (SGGLSNL), arginine 104, 146-152 (QYLPSRP), glutamine 244, and aspartate 264 contribute to the ATP site. 77–79 (GLS) serves as a coordination point for substrate.

The protein belongs to the choline/ethanolamine kinase family. As to quaternary structure, homodimer, and heterodimer with CHKA. In terms of tissue distribution, expressed ubiquitously with the highest level in testis.

The enzyme catalyses choline + ATP = phosphocholine + ADP + H(+). The catalysed reaction is ethanolamine + ATP = phosphoethanolamine + ADP + H(+). It functions in the pathway phospholipid metabolism; phosphatidylethanolamine biosynthesis; phosphatidylethanolamine from ethanolamine: step 1/3. In terms of biological role, has a key role in phospholipid metabolism, and catalyzes the first step of phosphatidylethanolamine and phosphatidylcholine biosynthesis. The sequence is that of Choline/ethanolamine kinase (Chkb) from Mus musculus (Mouse).